Consider the following 473-residue polypeptide: MKTLYSLRRFYHVETLFNGTLALTSRDQETTGFAWWAGNARLINLSGKLLGAHVAHAGLIVFWAGAMNLFEVAHFVPEKPMYEQGLILLPHLATLGWGVGPGGEVIDTFPYFVSGVLHLISSAVLGFGGIYHALLGPETLEESFPFFGYVWKDRNKMTTILGIHLILLGLGAFLLVFKALFFGGIYDTWAPGGGDVRKITNLTLSPSIIFGYLLKSPFGGEGWIVSVDDLEDIIGGHVWLGSICILGGIWHILTKPFAWARRALVWSGEAYLSYSLGALSVFGFIACCFVWFNNTAYPSEFYGPTGPEASQAQAFTFLVRDQRLGANVGSAQGPTGLGKYLMRSPTGEVIFGGETMRFWDLRAPWLEPLRGPNGLDLSRLKKDIQPWQERRSAEYMTHAPLGSLNSVGGVATEINAVNYVSPRSWLATSHFVLGFFLFVGHLWHAGRARAAAAGFEKGIDRDFEPVLSMTPLN.

Positions 1-14 are excised as a propeptide; that stretch reads MKTLYSLRRFYHVE. The residue at position 15 (Thr15) is an N-acetylthreonine. The residue at position 15 (Thr15) is a Phosphothreonine. The next 5 helical transmembrane spans lie at 69–93, 134–155, 178–200, 255–275, and 291–312; these read LFEVAHFVPEKPMYEQGLILLPHLA, LLGPETLEESFPFFGYVWKDRN, KALFFGGIYDTWAPGGGDVRKIT, KPFAWARRALVWSGEAYLSYS, and WFNNTAYPSEFYGPTGPEASQA. Position 367 (Glu367) interacts with [CaMn4O5] cluster. A helical transmembrane segment spans residues 447-471; the sequence is RARAAAAGFEKGIDRDFEPVLSMTP.

It belongs to the PsbB/PsbC family. PsbC subfamily. As to quaternary structure, PSII is composed of 1 copy each of membrane proteins PsbA, PsbB, PsbC, PsbD, PsbE, PsbF, PsbH, PsbI, PsbJ, PsbK, PsbL, PsbM, PsbT, PsbX, PsbY, PsbZ, Psb30/Ycf12, at least 3 peripheral proteins of the oxygen-evolving complex and a large number of cofactors. It forms dimeric complexes. Requires Binds multiple chlorophylls and provides some of the ligands for the Ca-4Mn-5O cluster of the oxygen-evolving complex. It may also provide a ligand for a Cl- that is required for oxygen evolution. PSII binds additional chlorophylls, carotenoids and specific lipids. as cofactor.

It localises to the plastid. It is found in the chloroplast thylakoid membrane. Functionally, one of the components of the core complex of photosystem II (PSII). It binds chlorophyll and helps catalyze the primary light-induced photochemical processes of PSII. PSII is a light-driven water:plastoquinone oxidoreductase, using light energy to abstract electrons from H(2)O, generating O(2) and a proton gradient subsequently used for ATP formation. The chain is Photosystem II CP43 reaction center protein from Fagopyrum esculentum subsp. ancestrale (Wild buckwheat).